We begin with the raw amino-acid sequence, 1254 residues long: Structural polyprotein (1254 aa).

The interval 43 to 77 (LQAQQMQQLISAVSALTTKQNVKAPKGQRQKKQQK) is host transcription inhibition. A disordered region spans residues 60-113 (TKQNVKAPKGQRQKKQQKPKEKKENQKKKPTQKKKQQQKPKPQAKKKKPGRRER). Residues 70–108 (QRQKKQQKPKEKKENQKKKPTQKKKQQQKPKPQAKKKKP) carry the Nuclear localization signal motif. The segment covering 84–110 (NQKKKPTQKKKQQQKPKPQAKKKKPGR) has biased composition (basic residues). The interval 95 to 123 (QQQKPKPQAKKKKPGRRERMCMKIENDCI) is binding to the viral RNA. A ribosome-binding region spans residues 108 to 122 (PGRRERMCMKIENDC). A disulfide bond links Cys122 and Cys137. The 149-residue stretch at 122-270 (CIFEVKLDGK…RVTPEGTEEW (149 aa)) folds into the Peptidase S3 domain. Catalysis depends on His148, which acts as the Charge relay system. Residues 153–163 (IDNPDLAKLTY) carry the Nuclear export signal motif. The interaction with spike glycoprotein E2 stretch occupies residues 164–169 (KKSSKY). Asp170 serves as the catalytic Charge relay system. Residues 192–202 (PEGHYNWHHGA) are dimerization of the capsid protein. Ser222 functions as the Charge relay system in the catalytic mechanism. A dimerization of the capsid protein region spans residues 228 to 232 (DNKGR). The interval 271–282 (SAALMMCILANT) is functions as an uncleaved signal peptide for the precursor of protein E3/E2. Residues 271–694 (SAALMMCILA…PHEIIQYYYG (424 aa)) are Extracellular-facing. Cystine bridges form between Cys277/Cys286, Cys291/Cys295, and Cys294/Cys326. A glycan (N-linked (GlcNAc...) asparagine; by host) is linked at Asn281. An N-linked (GlcNAc...) asparagine; by host glycan is attached at Asn328. Intrachain disulfides connect Cys353/Cys459, Cys356/Cys362, Cys425/Cys439, Cys487/Cys599, Cys535/Cys559, and Cys537/Cys554. Interaction with host Mxra8 receptor stretches follow at residues 360-363 (YFCY) and 396-398 (HAH). The interval 518–521 (TAGN) is interaction with host Mxra8 receptor. Residue Asn534 is glycosylated (N-linked (GlcNAc...) asparagine; by host). The segment at 550-556 (TINTCKI) is interaction with host Mxra8 receptor. N-linked (GlcNAc...) asparagine; by host glycosylation occurs at Asn596. The helical transmembrane segment at 695-715 (LYPAATIAAVSGASLMALLTL) threads the bilayer. The Cytoplasmic portion of the chain corresponds to 716–756 (AATCCMLATARRKCLTPYALTPGAVVPLTLGLLCCAPRANA). Cys719 carries S-palmitoyl cysteine; by host lipidation. Residues 724 to 728 (TARRK) form an interaction with the capsid protein region. 3 S-palmitoyl cysteine; by host lipidation sites follow: Cys729, Cys749, and Cys750. The interval 729 to 749 (CLTPYALTPGAVVPLTLGLLC) is transient transmembrane before p62-6K protein processing. A disulfide bridge connects residues Cys729 and Cys750. Topologically, residues 757-771 (ASFAETMAYLWDENK) are extracellular. Residues 772–792 (TLFWMEFAAPAAALALLACCI) form a helical membrane-spanning segment. Position 793 (Lys793) is a topological domain, cytoplasmic. The helical transmembrane segment at 794-814 (SLICCCKPFSFLVLLSLGASA) threads the bilayer. Residues 815–1231 (KAYEHTATIP…AMTWVQRLAS (417 aa)) are Extracellular-facing. 4 disulfide bridges follow: Cys865–Cys930, Cys878–Cys910, Cys879–Cys912, and Cys884–Cys894. The interval 900–917 (VYPFMWGGAYCFCDSENT) is E1 fusion peptide loop. Asn957 carries an N-linked (GlcNAc...) asparagine; by host glycan. Intrachain disulfides connect Cys1075-Cys1087, Cys1117-Cys1192, Cys1122-Cys1196, and Cys1144-Cys1186. Residues 1232-1252 (GLGGLALIAVVVLVLVTCITM) traverse the membrane as a helical segment. Cys1249 carries S-palmitoyl cysteine; by host lipidation. Cys1249 carries S-stearoyl cysteine; by host lipidation. Residues 1253-1254 (RR) are Cytoplasmic-facing.

As to quaternary structure, homodimer. Homomultimer. Interacts with host karyopherin KPNA4; this interaction allows the nuclear import of the viral capsid protein. Interacts with spike glycoprotein E2. Interacts with host IRAK1; the interaction leads to inhibition of IRAK1-dependent signaling. The precursor of protein E3/E2 and E1 form a heterodimer shortly after synthesis. In terms of assembly, interacts with spike glycoprotein E2. The precursor of protein E3/E2 and E1 form a heterodimer shortly after synthesis. Processing of the precursor of protein E3/E2 into E2 and E3 results in a heterodimer of the spike glycoproteins E2 and E1. Spike at virion surface are constituted of a trimer of E2-E1 heterodimers. After target cell attachment and endocytosis, E1 change conformation to form homotrimers. Interacts with 6K protein. E1/E2 heterodimer interacts with host LDLR. As to quaternary structure, interacts with spike glycoprotein E1. Processing of the precursor of protein E3/E2 into E2 and E3 results in a heterodimer of the spike glycoproteins E2 and E1. Spike at virion surface are constituted of a trimer of E2-E1 heterodimers. Interacts with 6K protein. Interacts with host MXRA8; this interaction mediates virus entry. Oligomer. Interacts with spike glycoprotein E1. Interacts with spike glycoprotein E2. Structural polyprotein: Specific enzymatic cleavages in vivo yield mature proteins. Capsid protein is auto-cleaved during polyprotein translation, unmasking a signal peptide at the N-terminus of the precursor of E3/E2. The remaining polyprotein is then targeted to the host endoplasmic reticulum, where host signal peptidase cleaves it into pE2, 6K and E1 proteins. pE2 is further processed to mature E3 and E2 by host furin in trans-Golgi vesicle. Post-translationally, palmitoylated via thioester bonds. These palmitoylations may induce disruption of the C-terminus transmembrane. This would result in the reorientation of E2 C-terminus from lumenal to cytoplasmic side. In terms of processing, N-glycosylated. Palmitoylated via thioester bonds.

Its subcellular location is the virion. The protein localises to the host cytoplasm. It localises to the host cell membrane. It is found in the host nucleus. The protein resides in the virion membrane. Its subcellular location is the host Golgi apparatus. The protein localises to the host trans-Golgi network. It localises to the host endoplasmic reticulum. It catalyses the reaction Autocatalytic release of the core protein from the N-terminus of the togavirus structural polyprotein by hydrolysis of a -Trp-|-Ser- bond.. In terms of biological role, forms an icosahedral capsid with a T=4 symmetry composed of 240 copies of the capsid protein surrounded by a lipid membrane through which penetrate 80 spikes composed of trimers of E1-E2 heterodimers. The capsid protein binds to the viral RNA genome at a site adjacent to a ribosome binding site for viral genome translation following genome release. Possesses a protease activity that results in its autocatalytic cleavage from the nascent structural protein. Following its self-cleavage, the capsid protein transiently associates with ribosomes, and within several minutes the protein binds to viral RNA and rapidly assembles into icosahedric core particles. The resulting nucleocapsid eventually associates with the cytoplasmic domain of the spike glycoprotein E2 at the cell membrane, leading to budding and formation of mature virions. In case of infection, new virions attach to target cells and after clathrin-mediated endocytosis their membrane fuses with the host endosomal membrane. This leads to the release of the nucleocapsid into the cytoplasm, followed by an uncoating event necessary for the genomic RNA to become accessible. The uncoating might be triggered by the interaction of capsid proteins with ribosomes. Binding of ribosomes would release the genomic RNA since the same region is genomic RNA-binding and ribosome-binding. Specifically inhibits interleukin-1 receptor-associated kinase 1/IRAK1-dependent signaling during viral entry, representing a means by which the alphaviruses may evade innate immune detection and activation prior to viral gene expression. Functionally, provides the signal sequence for the translocation of the precursor of protein E3/E2 to the host endoplasmic reticulum. Furin-cleaved E3 remains associated with spike glycoprotein E1 and mediates pH protection of the latter during the transport via the secretory pathway. After virion release from the host cell, the assembly protein E3 is gradually released in the extracellular space. Its function is as follows. Plays a role in viral attachment to target host cell, by binding to the cell receptor MXRA8. The host LDLR may also act as a cell receptor for viral entry. Synthesized as a p62 precursor which is processed by furin at the cell membrane just before virion budding, giving rise to E2-E1 heterodimer. The p62-E1 heterodimer is stable, whereas E2-E1 is unstable and dissociate at low pH. p62 is processed at the last step, presumably to avoid E1 fusion activation before its final export to cell surface. E2 C-terminus contains a transitory transmembrane that would be disrupted by palmitoylation, resulting in reorientation of the C-terminal tail from lumenal to cytoplasmic side. This step is critical since E2 C-terminus is involved in budding by interacting with capsid proteins. This release of E2 C-terminus in cytoplasm occurs lately in protein export, and precludes premature assembly of particles at the endoplasmic reticulum membrane. Acts as a viroporin that participates in virus glycoprotein processing and transport to the plasma membrane, cell permeabilization and budding of viral particles. The cation channel is permeable to Na(+)&gt;K(+)&gt;Ca(2+) in vitro. Disrupts the calcium homeostasis of the cell, probably at the endoplasmic reticulum level. This leads to cytoplasmic calcium elevation. Because of its lipophilic properties, the 6K protein is postulated to influence the selection of lipids that interact with the transmembrane domains of the glycoproteins, which, in turn, affects the deformability of the bilayer required for the extreme curvature that occurs as budding proceeds. Present in low amount in virions, about 3% compared to viral glycoproteins. In terms of biological role, class II viral fusion protein. Fusion activity is inactive as long as E1 is bound to E2 in mature virion. After virus attachment to target cell via host MXRA8 and endocytosis, acidification of the endosome induce dissociation of E1/E2 heterodimer and concomitant trimerization of the E1 subunits. This E1 trimer is fusion active, and promotes release of viral nucleocapsid in cytoplasm after endosome and viral membrane fusion. Efficient fusion requires the presence of cholesterol and sphingolipid in the target membrane. The chain is Structural polyprotein from Aedes (Common banded mosquito).